A 217-amino-acid polypeptide reads, in one-letter code: Deoxyribose-phosphate aldolase (217 aa).

Residue aspartate 89 is the Proton donor/acceptor of the active site. The Schiff-base intermediate with acetaldehyde role is filled by lysine 151. Lysine 180 (proton donor/acceptor) is an active-site residue.

It belongs to the DeoC/FbaB aldolase family. DeoC type 1 subfamily.

The protein resides in the cytoplasm. The catalysed reaction is 2-deoxy-D-ribose 5-phosphate = D-glyceraldehyde 3-phosphate + acetaldehyde. It participates in carbohydrate degradation; 2-deoxy-D-ribose 1-phosphate degradation; D-glyceraldehyde 3-phosphate and acetaldehyde from 2-deoxy-alpha-D-ribose 1-phosphate: step 2/2. Functionally, catalyzes a reversible aldol reaction between acetaldehyde and D-glyceraldehyde 3-phosphate to generate 2-deoxy-D-ribose 5-phosphate. This chain is Deoxyribose-phosphate aldolase, found in Metamycoplasma arthritidis (strain 158L3-1) (Mycoplasma arthritidis).